Reading from the N-terminus, the 277-residue chain is Phosphoribosylaminoimidazole-succinocarboxamide synthase (277 aa).

Belongs to the SAICAR synthetase family.

It carries out the reaction 5-amino-1-(5-phospho-D-ribosyl)imidazole-4-carboxylate + L-aspartate + ATP = (2S)-2-[5-amino-1-(5-phospho-beta-D-ribosyl)imidazole-4-carboxamido]succinate + ADP + phosphate + 2 H(+). It functions in the pathway purine metabolism; IMP biosynthesis via de novo pathway; 5-amino-1-(5-phospho-D-ribosyl)imidazole-4-carboxamide from 5-amino-1-(5-phospho-D-ribosyl)imidazole-4-carboxylate: step 1/2. This chain is Phosphoribosylaminoimidazole-succinocarboxamide synthase, found in Salinispora arenicola (strain CNS-205).